We begin with the raw amino-acid sequence, 207 residues long: Outer-membrane lipoprotein LolB (207 aa).

Positions 1–21 (MTLPDFRLIRLLPLASLVLTA) are cleaved as a signal peptide. A lipid anchor (N-palmitoyl cysteine) is attached at cysteine 22. Cysteine 22 carries S-diacylglycerol cysteine lipidation.

The protein belongs to the LolB family. In terms of assembly, monomer.

The protein resides in the cell outer membrane. Plays a critical role in the incorporation of lipoproteins in the outer membrane after they are released by the LolA protein. The chain is Outer-membrane lipoprotein LolB from Salmonella agona (strain SL483).